We begin with the raw amino-acid sequence, 609 residues long: UvrABC system protein C (609 aa).

The GIY-YIG domain maps to 15 to 92 (TGSGVYQMQD…IKQFRPRYNV (78 aa)). The UVR domain occupies 202 to 237 (DQVIIKLTERMEVASENLVFEEAAHYRDQIRQLRRL).

This sequence belongs to the UvrC family. In terms of assembly, interacts with UvrB in an incision complex.

It is found in the cytoplasm. Functionally, the UvrABC repair system catalyzes the recognition and processing of DNA lesions. UvrC both incises the 5' and 3' sides of the lesion. The N-terminal half is responsible for the 3' incision and the C-terminal half is responsible for the 5' incision. This is UvrABC system protein C from Coxiella burnetii (strain CbuG_Q212) (Coxiella burnetii (strain Q212)).